The following is a 495-amino-acid chain: MAGKVRSLLPPLLLAAAGLAGLLLLCVPTRDVREPPALKYGIVLDAGSSHTSMFIYKWPADKENDTGIVGQHSSCDVPGGGISSYADNPSGASQSLVGCLEQALQDVPKERHAGTPLYLGATAGMRLLNLTNPEASTSVLMAVTHTLTQYPFDFRGARILSGQEEGVFGWVTANYLLENFIKYGWVGRWFRPRKGTLGAMDLGGASTQITFETTSPAEDRASEVQLHLYGQHYRVYTHSFLCYGRDQVLQRLLASALQTHGFHPCWPRGFSTQVLLGDVYQSPCTMAQRPQNFNSSARVSLSGSSDPHLCRDLVSGLFSFSSCPFSRCSFNGVFQPPVAGNFVAFSAFFYTVDFLRTSMGLPVATLQQLEAAAVNVCNQTWAQLQARVPGQRARLADYCAGAMFVQQLLSRGYGFDERAFGGVIFQKKAADTAVGWALGYMLNLTNLIPADPPGLRKGTDFSSWVVLLLLFASALLAALVLLLRQVHSAKLPSTI.

Residues 1–7 (MAGKVRS) lie on the Cytoplasmic side of the membrane. The chain crosses the membrane as a helical span at residues 8–28 (LLPPLLLAAAGLAGLLLLCVP). The Extracellular portion of the chain corresponds to 29–462 (TRDVREPPAL…PGLRKGTDFS (434 aa)). Residue asparagine 64 is glycosylated (N-linked (GlcNAc...) asparagine). A disulfide bridge connects residues cysteine 75 and cysteine 99. A glycan (N-linked (GlcNAc...) asparagine) is linked at asparagine 129. Catalysis depends on glutamate 165, which acts as the Proton acceptor. 204–208 (GASTQ) contacts ATP. 4 disulfide bridges follow: cysteine 242-cysteine 284, cysteine 265-cysteine 310, cysteine 323-cysteine 328, and cysteine 377-cysteine 399. Residue asparagine 294 is glycosylated (N-linked (GlcNAc...) asparagine). Residues asparagine 378 and asparagine 443 are each glycosylated (N-linked (GlcNAc...) asparagine). Residues 463–483 (SWVVLLLLFASALLAALVLLL) traverse the membrane as a helical segment. The Cytoplasmic segment spans residues 484–495 (RQVHSAKLPSTI).

It belongs to the GDA1/CD39 NTPase family. Ca(2+) is required as a cofactor. It depends on Mg(2+) as a cofactor. Brain, placenta, skeletal muscle, kidney, pancreas, heart, ovary, testis, colon, small intestine, prostate and pancreas. No expression in adult thymus, spleen, lung, liver and peripheral blood leukocytes.

The protein localises to the cell membrane. It localises to the endoplasmic reticulum membrane. Functionally, in the nervous system, could hydrolyze ATP and other nucleotides to regulate purinergic neurotransmission. Hydrolyzes ADP only to a marginal extent. The order of activity with different substrates is ATP &gt; GTP &gt; CTP = ITP &gt; UTP &gt;&gt; ADP = UDP. The chain is Ectonucleoside triphosphate diphosphohydrolase 2 (ENTPD2) from Homo sapiens (Human).